Reading from the N-terminus, the 212-residue chain is Protein Rv0786c (212 aa).

In Mycobacterium tuberculosis (strain ATCC 25618 / H37Rv), this protein is Protein Rv0786c.